Here is a 444-residue protein sequence, read N- to C-terminus: Glutamyl-tRNA reductase (444 aa).

Residues 49-52 (TCNR), Ser-109, 114-116 (ETQ), and Gln-120 contribute to the substrate site. The Nucleophile role is filled by Cys-50. 189–194 (GAGKMG) is an NADP(+) binding site.

It belongs to the glutamyl-tRNA reductase family. In terms of assembly, homodimer.

The catalysed reaction is (S)-4-amino-5-oxopentanoate + tRNA(Glu) + NADP(+) = L-glutamyl-tRNA(Glu) + NADPH + H(+). It participates in porphyrin-containing compound metabolism; protoporphyrin-IX biosynthesis; 5-aminolevulinate from L-glutamyl-tRNA(Glu): step 1/2. Its function is as follows. Catalyzes the NADPH-dependent reduction of glutamyl-tRNA(Glu) to glutamate 1-semialdehyde (GSA). This chain is Glutamyl-tRNA reductase, found in Bacillus cereus (strain ATCC 14579 / DSM 31 / CCUG 7414 / JCM 2152 / NBRC 15305 / NCIMB 9373 / NCTC 2599 / NRRL B-3711).